A 179-amino-acid polypeptide reads, in one-letter code: Large ribosomal subunit protein uL5 (179 aa).

It belongs to the universal ribosomal protein uL5 family. As to quaternary structure, part of the 50S ribosomal subunit; part of the 5S rRNA/L5/L18/L25 subcomplex. Contacts the 5S rRNA and the P site tRNA. Forms a bridge to the 30S subunit in the 70S ribosome.

This is one of the proteins that bind and probably mediate the attachment of the 5S RNA into the large ribosomal subunit, where it forms part of the central protuberance. In the 70S ribosome it contacts protein S13 of the 30S subunit (bridge B1b), connecting the 2 subunits; this bridge is implicated in subunit movement. Contacts the P site tRNA; the 5S rRNA and some of its associated proteins might help stabilize positioning of ribosome-bound tRNAs. This chain is Large ribosomal subunit protein uL5, found in Pseudomonas syringae pv. tomato (strain ATCC BAA-871 / DC3000).